The primary structure comprises 439 residues: Adenylosuccinate synthetase (439 aa).

GTP contacts are provided by residues Gly25–Lys31, Gly53–Thr55, and Lys62. Residue Asp26 is the Proton acceptor of the active site. Mg(2+)-binding residues include Asp26 and Gly53. IMP contacts are provided by residues Asp26 to Lys29 and Asn51 to His54. Residue His54 is the Proton donor of the active site. Residues Thr141, Arg155, Asn232, and Thr247 each contribute to the IMP site. Thr307 lines the GTP pocket. Position 307 to 313 (Thr307 to Arg313) interacts with substrate. An IMP-binding site is contributed by Arg311. Residues Arg313, Lys339–Asp341, and Gly425–Gly427 contribute to the GTP site.

It belongs to the adenylosuccinate synthetase family. As to quaternary structure, homodimer. It depends on Mg(2+) as a cofactor.

Its subcellular location is the cytoplasm. The catalysed reaction is IMP + L-aspartate + GTP = N(6)-(1,2-dicarboxyethyl)-AMP + GDP + phosphate + 2 H(+). It functions in the pathway purine metabolism; AMP biosynthesis via de novo pathway; AMP from IMP: step 1/2. Its function is as follows. Plays an important role in the salvage pathway for purine nucleotide biosynthesis. Catalyzes the first commited step in the biosynthesis of AMP from IMP. This is Adenylosuccinate synthetase from Plasmodium chabaudi chabaudi.